Reading from the N-terminus, the 399-residue chain is Tryptophan synthase beta chain (399 aa).

K92 is subject to N6-(pyridoxal phosphate)lysine.

Belongs to the TrpB family. Tetramer of two alpha and two beta chains. It depends on pyridoxal 5'-phosphate as a cofactor.

It catalyses the reaction (1S,2R)-1-C-(indol-3-yl)glycerol 3-phosphate + L-serine = D-glyceraldehyde 3-phosphate + L-tryptophan + H2O. It participates in amino-acid biosynthesis; L-tryptophan biosynthesis; L-tryptophan from chorismate: step 5/5. Functionally, the beta subunit is responsible for the synthesis of L-tryptophan from indole and L-serine. The protein is Tryptophan synthase beta chain of Legionella pneumophila (strain Paris).